Reading from the N-terminus, the 104-residue chain is Large ribosomal subunit protein eL42 (104 aa).

Positions 22-56 (KVSQAKKSKDNPRAQGNRRYARKQRGYGGQTKPIL) are disordered.

Belongs to the eukaryotic ribosomal protein eL42 family.

The protein is Large ribosomal subunit protein eL42 (RPL44) of Encephalitozoon cuniculi (strain GB-M1) (Microsporidian parasite).